Reading from the N-terminus, the 395-residue chain is Torsin-3A (395 aa).

A signal peptide spans 1-24 (MFFGAFWLLLLLLLPPLRPPGAQG). An N-linked (GlcNAc...) asparagine glycan is attached at Asn-120. Residue 165 to 172 (GWSGTGKN) coordinates ATP.

The protein belongs to the ClpA/ClpB family. Torsin subfamily. As to quaternary structure, may not form homohexamers. In terms of processing, N-glycosylated.

The protein resides in the cytoplasm. It is found in the endoplasmic reticulum lumen. The polypeptide is Torsin-3A (Tor3a) (Rattus norvegicus (Rat)).